Reading from the N-terminus, the 156-residue chain is Ribosomal RNA large subunit methyltransferase H (156 aa).

Residues L72, G104, and L123–L128 each bind S-adenosyl-L-methionine.

Belongs to the RNA methyltransferase RlmH family. In terms of assembly, homodimer.

The protein resides in the cytoplasm. It catalyses the reaction pseudouridine(1915) in 23S rRNA + S-adenosyl-L-methionine = N(3)-methylpseudouridine(1915) in 23S rRNA + S-adenosyl-L-homocysteine + H(+). Functionally, specifically methylates the pseudouridine at position 1915 (m3Psi1915) in 23S rRNA. This Syntrophotalea carbinolica (strain DSM 2380 / NBRC 103641 / GraBd1) (Pelobacter carbinolicus) protein is Ribosomal RNA large subunit methyltransferase H.